Consider the following 741-residue polypeptide: Catalase-peroxidase (741 aa).

Residues 86-208 constitute a cross-link (tryptophyl-tyrosyl-methioninium (Trp-Tyr) (with M-234)); it reads WHSAGSYRIF…FAATEMGLIY (123 aa). His-87 serves as the catalytic Proton acceptor. Positions 208 to 234 form a cross-link, tryptophyl-tyrosyl-methioninium (Tyr-Met) (with W-86); sequence YVNPEGPGGNPDPLGSAQEIRVAFRRM. His-249 is a heme b binding site.

Belongs to the peroxidase family. Peroxidase/catalase subfamily. As to quaternary structure, homodimer or homotetramer. Heme b is required as a cofactor. Formation of the three residue Trp-Tyr-Met cross-link is important for the catalase, but not the peroxidase activity of the enzyme.

The catalysed reaction is H2O2 + AH2 = A + 2 H2O. The enzyme catalyses 2 H2O2 = O2 + 2 H2O. Its function is as follows. Bifunctional enzyme with both catalase and broad-spectrum peroxidase activity. Also displays NADH oxidase, INH lyase and isonicotinoyl-NAD synthase activities. In Archaeoglobus fulgidus (strain ATCC 49558 / DSM 4304 / JCM 9628 / NBRC 100126 / VC-16), this protein is Catalase-peroxidase.